The chain runs to 293 residues: Acetylglutamate kinase (293 aa).

Substrate is bound by residues 68–69 (GG), Arg90, and Asn189.

Belongs to the acetylglutamate kinase family. ArgB subfamily.

The protein resides in the cytoplasm. The enzyme catalyses N-acetyl-L-glutamate + ATP = N-acetyl-L-glutamyl 5-phosphate + ADP. Its pathway is amino-acid biosynthesis; L-arginine biosynthesis; N(2)-acetyl-L-ornithine from L-glutamate: step 2/4. Functionally, catalyzes the ATP-dependent phosphorylation of N-acetyl-L-glutamate. The chain is Acetylglutamate kinase from Mycobacterium ulcerans (strain Agy99).